We begin with the raw amino-acid sequence, 83 residues long: Phosphoribosylformylglycinamidine synthase subunit PurS (83 aa).

The protein belongs to the PurS family. As to quaternary structure, homodimer. Part of the FGAM synthase complex composed of 1 PurL, 1 PurQ and 2 PurS subunits.

The protein localises to the cytoplasm. The catalysed reaction is N(2)-formyl-N(1)-(5-phospho-beta-D-ribosyl)glycinamide + L-glutamine + ATP + H2O = 2-formamido-N(1)-(5-O-phospho-beta-D-ribosyl)acetamidine + L-glutamate + ADP + phosphate + H(+). It participates in purine metabolism; IMP biosynthesis via de novo pathway; 5-amino-1-(5-phospho-D-ribosyl)imidazole from N(2)-formyl-N(1)-(5-phospho-D-ribosyl)glycinamide: step 1/2. In terms of biological role, part of the phosphoribosylformylglycinamidine synthase complex involved in the purines biosynthetic pathway. Catalyzes the ATP-dependent conversion of formylglycinamide ribonucleotide (FGAR) and glutamine to yield formylglycinamidine ribonucleotide (FGAM) and glutamate. The FGAM synthase complex is composed of three subunits. PurQ produces an ammonia molecule by converting glutamine to glutamate. PurL transfers the ammonia molecule to FGAR to form FGAM in an ATP-dependent manner. PurS interacts with PurQ and PurL and is thought to assist in the transfer of the ammonia molecule from PurQ to PurL. This Methanocaldococcus jannaschii (strain ATCC 43067 / DSM 2661 / JAL-1 / JCM 10045 / NBRC 100440) (Methanococcus jannaschii) protein is Phosphoribosylformylglycinamidine synthase subunit PurS.